Consider the following 430-residue polypeptide: 3-phosphoshikimate 1-carboxyvinyltransferase (430 aa).

Lys21, Ser22, and Arg26 together coordinate 3-phosphoshikimate. Lys21 provides a ligand contact to phosphoenolpyruvate. Gly92 and Arg120 together coordinate phosphoenolpyruvate. Residues Ser165, Ser166, Gln167, Ser193, Asp314, and Lys341 each coordinate 3-phosphoshikimate. Gln167 provides a ligand contact to phosphoenolpyruvate. The active-site Proton acceptor is Asp314. Phosphoenolpyruvate-binding residues include Arg345, Arg386, and Lys411.

The protein belongs to the EPSP synthase family. As to quaternary structure, monomer.

It localises to the cytoplasm. It carries out the reaction 3-phosphoshikimate + phosphoenolpyruvate = 5-O-(1-carboxyvinyl)-3-phosphoshikimate + phosphate. It functions in the pathway metabolic intermediate biosynthesis; chorismate biosynthesis. Its function is as follows. Catalyzes the transfer of the enolpyruvyl moiety of phosphoenolpyruvate (PEP) to the 5-hydroxyl of shikimate-3-phosphate (S3P) to produce enolpyruvyl shikimate-3-phosphate and inorganic phosphate. This is 3-phosphoshikimate 1-carboxyvinyltransferase from Methanospirillum hungatei JF-1 (strain ATCC 27890 / DSM 864 / NBRC 100397 / JF-1).